Reading from the N-terminus, the 145-residue chain is LIM domain only protein 3 (145 aa).

2 LIM zinc-binding domains span residues 11-73 and 75-137; these read KGCA…LFGT and GNCA…GLMK.

The sequence is that of LIM domain only protein 3 (Lmo3) from Rattus norvegicus (Rat).